The chain runs to 125 residues: Evasin P672 (125 aa).

The N-terminal stretch at 1 to 21 (MAHKIAIGLVCVLYALHIMSA) is a signal peptide. N-linked (GlcNAc...) asparagine glycans are attached at residues N35, N55, N65, N72, N78, N104, N112, and N118. Intrachain disulfides connect C70-C110, C87-C115, and C105-C124.

It is found in the secreted. Functionally, salivary chemokine-binding protein which has chemokine-neutralizing activity and binds to host chemokines CCL1, CCL2, CCL3, CCL3L1, CCL7, CCL8, CCL11, CCL12, CCL13, CCL14, CCL15, CCL16, CCL18 and CCL23. Binds to CCL8 with 1:1 stoichiometry and disrupts CCL8 homodimer formation. This chain is Evasin P672, found in Rhipicephalus pulchellus (Yellow backed tick).